The following is a 309-amino-acid chain: Methionyl-tRNA formyltransferase (309 aa).

Residue 112 to 115 (SLLP) coordinates (6S)-5,6,7,8-tetrahydrofolate.

Belongs to the Fmt family.

It carries out the reaction L-methionyl-tRNA(fMet) + (6R)-10-formyltetrahydrofolate = N-formyl-L-methionyl-tRNA(fMet) + (6S)-5,6,7,8-tetrahydrofolate + H(+). Its function is as follows. Attaches a formyl group to the free amino group of methionyl-tRNA(fMet). The formyl group appears to play a dual role in the initiator identity of N-formylmethionyl-tRNA by promoting its recognition by IF2 and preventing the misappropriation of this tRNA by the elongation apparatus. This chain is Methionyl-tRNA formyltransferase, found in Bartonella bacilliformis (strain ATCC 35685 / KC583 / Herrer 020/F12,63).